The primary structure comprises 103 residues: Interleukin-8 (103 aa).

Positions 1 to 25 are cleaved as a signal peptide; that stretch reads MTSKLAVAFLAVFLLSAALCEAAVL. At R27 the chain carries Citrulline. Disulfide bonds link C34-C61 and C36-C77.

It belongs to the intercrine alpha (chemokine CxC) family. As to quaternary structure, homodimer. Interacts with TNFAIP6 (via Link domain); this interaction interferes with chemokine binding to glycosaminoglycans. Citrullination at Arg-27 prevents proteolysis, and dampens tissue inflammation, it also enhances leukocytosis, possibly through impaired chemokine clearance from the blood circulation. Alveolar macrophages.

It localises to the secreted. Chemotactic factor that mediates inflammatory response by attracting neutrophils, basophils, and T-cells to clear pathogens and protect the host from infection. Also plays an important role in neutrophil activation. Released in response to an inflammatory stimulus, exerts its effect by binding to the G-protein-coupled receptors CXCR1 and CXCR2, primarily found in neutrophils, monocytes and endothelial cells. G-protein heterotrimer (alpha, beta, gamma subunits) constitutively binds to CXCR1/CXCR2 receptor and activation by IL8 leads to beta and gamma subunits release from Galpha (GNAI2 in neutrophils) and activation of several downstream signaling pathways including PI3K and MAPK pathways. The sequence is that of Interleukin-8 (CXCL8) from Sus scrofa (Pig).